The sequence spans 373 residues: Heterogeneous nuclear ribonucleoprotein A3 homolog 1 (373 aa).

A disordered region spans residues 1–25 (MPRGGMDDHWPSSDDQGHDPKEPEQ). RRM domains are found at residues 27–110 (RKLF…DSAR) and 118–206 (KKIF…SAQR). 2 disordered regions span residues 196–218 (KQEM…FMGR) and 319–373 (DFGN…GRRF). Residues 207–218 (GRGGGGSNFMGR) show a composition bias toward gly residues. A compositionally biased stretch (low complexity) spans 319 to 333 (DFGNYGGQQQSNYGP). Gly residues predominate over residues 334–373 (MKGGSFSGRSSGGSGSGPYGGGYGSGGGGGGGGSYGGRRF).

The protein localises to the nucleus. This is Heterogeneous nuclear ribonucleoprotein A3 homolog 1 from Xenopus laevis (African clawed frog).